The primary structure comprises 315 residues: Probable cell division protein WhiA (315 aa).

A DNA-binding region (H-T-H motif) is located at residues 280-313 (SLKELGEMLDPPVGKSGINHRLRKIEKIAEELRT).

Belongs to the WhiA family.

Functionally, involved in cell division and chromosome segregation. This Clostridium beijerinckii (strain ATCC 51743 / NCIMB 8052) (Clostridium acetobutylicum) protein is Probable cell division protein WhiA.